The following is a 472-amino-acid chain: Glutamate--tRNA ligase (472 aa).

A 'HIGH' region motif is present at residues 10-20 (PSPTGYLHVGG). Zn(2+)-binding residues include cysteine 99, cysteine 101, cysteine 126, and aspartate 128. A 'KMSKS' region motif is present at residues 238–242 (KLSKR). Residue lysine 241 coordinates ATP.

The protein belongs to the class-I aminoacyl-tRNA synthetase family. Glutamate--tRNA ligase type 1 subfamily. Monomer. It depends on Zn(2+) as a cofactor.

It is found in the cytoplasm. The enzyme catalyses tRNA(Glu) + L-glutamate + ATP = L-glutamyl-tRNA(Glu) + AMP + diphosphate. In terms of biological role, catalyzes the attachment of glutamate to tRNA(Glu) in a two-step reaction: glutamate is first activated by ATP to form Glu-AMP and then transferred to the acceptor end of tRNA(Glu). The polypeptide is Glutamate--tRNA ligase (Photorhabdus laumondii subsp. laumondii (strain DSM 15139 / CIP 105565 / TT01) (Photorhabdus luminescens subsp. laumondii)).